A 359-amino-acid chain; its full sequence is Chorismate synthase (359 aa).

Arginine 47 provides a ligand contact to NADP(+). Residues arginine 123 to serine 125, glycine 283, lysine 298 to serine 302, and arginine 326 each bind FMN.

It belongs to the chorismate synthase family. As to quaternary structure, homotetramer. FMNH2 is required as a cofactor.

The enzyme catalyses 5-O-(1-carboxyvinyl)-3-phosphoshikimate = chorismate + phosphate. It participates in metabolic intermediate biosynthesis; chorismate biosynthesis; chorismate from D-erythrose 4-phosphate and phosphoenolpyruvate: step 7/7. Catalyzes the anti-1,4-elimination of the C-3 phosphate and the C-6 proR hydrogen from 5-enolpyruvylshikimate-3-phosphate (EPSP) to yield chorismate, which is the branch point compound that serves as the starting substrate for the three terminal pathways of aromatic amino acid biosynthesis. This reaction introduces a second double bond into the aromatic ring system. In Chlamydia pneumoniae (Chlamydophila pneumoniae), this protein is Chorismate synthase.